The primary structure comprises 428 residues: MLLGSLFEQTEELFHSEGFPGPDHSNFPLSELQFPAEKLYEDWPVRGPMGLSEREDTDEFLQMMINPNEVYSTGPAAAESPESDSGFSDDPRPDTPPQSETSPPLPQPTPVYELVYDIGSLEERKSQSDMSSVISIQLAEDWNSAPLLIPESCIVNDLPPVCKSTPLPIRLTPADLIAVDALYPELHLTEEEKRLLSQEGVALPNNLPLTKAEERILKKVRRKIRNKQSAQDSRRRKKEYIDGLESRVAACSSQNQELHKKVVELEKHNISLITQLRKLQTLIKQTSNKAAQTSTCVLILLFSLALLVFPSYSPFRSRPSASQEDSYRPTGVISRNILNKGGFSEVADPQASDTLHRAQQREEGDPGRHVVPPANPNPEETEPVSNRARTTPEPDEQVLAEPEAAILGQKGEPPGSDNLSKTARADEM.

A required for transcriptional activation region spans residues 1–68 (MLLGSLFEQT…EFLQMMINPN (68 aa)). Over 1 to 294 (MLLGSLFEQT…QTSNKAAQTS (294 aa)) the chain is Cytoplasmic. Residues 71-111 (YSTGPAAAESPESDSGFSDDPRPDTPPQSETSPPLPQPTPV) are disordered. The bZIP domain maps to 216 to 279 (ILKKVRRKIR…ISLITQLRKL (64 aa)). The interval 218–247 (KKVRRKIRNKQSAQDSRRRKKEYIDGLESR) is basic motif. The leucine-zipper stretch occupies residues 258-279 (LHKKVVELEKHNISLITQLRKL). A helical; Signal-anchor for type II membrane protein transmembrane segment spans residues 295–315 (TCVLILLFSLALLVFPSYSPF). The Lumenal segment spans residues 316 to 428 (RSRPSASQED…LSKTARADEM (113 aa)). Residues 339 to 428 (NKGGFSEVAD…LSKTARADEM (90 aa)) are disordered. Residues 354 to 368 (TLHRAQQREEGDPGR) show a composition bias toward basic and acidic residues. Asparagine 418 carries an N-linked (GlcNAc...) asparagine glycan.

It belongs to the bZIP family. ATF subfamily. In terms of assembly, binds DNA as a dimer. Controlled by regulated intramembrane proteolysis (RIP). A fragment containing the cytoplasmic transcription factor domain is released by proteolysis. The cleavage seems to be performed sequentially by site-1 and site-2 proteases (PS1 and PS2).

The protein localises to the endoplasmic reticulum membrane. Its subcellular location is the nucleus. In terms of biological role, transcriptional activator. This is Cyclic AMP-responsive element-binding protein 3-like protein 4 (creb3l4) from Xenopus tropicalis (Western clawed frog).